The following is a 419-amino-acid chain: Enolase (419 aa).

Glutamine 161 lines the (2R)-2-phosphoglycerate pocket. Glutamate 205 (proton donor) is an active-site residue. Positions 240, 283, and 309 each coordinate Mg(2+). (2R)-2-phosphoglycerate is bound by residues lysine 334, arginine 363, serine 364, and lysine 385. Lysine 334 acts as the Proton acceptor in catalysis.

The protein belongs to the enolase family. The cofactor is Mg(2+).

The protein localises to the cytoplasm. The protein resides in the secreted. It is found in the cell surface. It carries out the reaction (2R)-2-phosphoglycerate = phosphoenolpyruvate + H2O. It participates in carbohydrate degradation; glycolysis; pyruvate from D-glyceraldehyde 3-phosphate: step 4/5. Functionally, catalyzes the reversible conversion of 2-phosphoglycerate (2-PG) into phosphoenolpyruvate (PEP). It is essential for the degradation of carbohydrates via glycolysis. In Saccharolobus islandicus (strain L.S.2.15 / Lassen #1) (Sulfolobus islandicus), this protein is Enolase.